The primary structure comprises 199 residues: Pyridoxal 5'-phosphate synthase subunit PdxT (199 aa).

49-51 (GES) serves as a coordination point for L-glutamine. Cys81 serves as the catalytic Nucleophile. L-glutamine-binding positions include Arg110 and 139–140 (IR). Catalysis depends on charge relay system residues His175 and Glu177.

It belongs to the glutaminase PdxT/SNO family. In the presence of PdxS, forms a dodecamer of heterodimers. Only shows activity in the heterodimer.

The catalysed reaction is aldehydo-D-ribose 5-phosphate + D-glyceraldehyde 3-phosphate + L-glutamine = pyridoxal 5'-phosphate + L-glutamate + phosphate + 3 H2O + H(+). It carries out the reaction L-glutamine + H2O = L-glutamate + NH4(+). It functions in the pathway cofactor biosynthesis; pyridoxal 5'-phosphate biosynthesis. Catalyzes the hydrolysis of glutamine to glutamate and ammonia as part of the biosynthesis of pyridoxal 5'-phosphate. The resulting ammonia molecule is channeled to the active site of PdxS. The polypeptide is Pyridoxal 5'-phosphate synthase subunit PdxT (Frankia casuarinae (strain DSM 45818 / CECT 9043 / HFP020203 / CcI3)).